A 36-amino-acid polypeptide reads, in one-letter code: Alpha-amylase inhibitor AI-3688 (36 aa).

An intrachain disulfide couples C9 to C25.

In terms of biological role, inhibits mammalian alpha-amylases specifically but has no action on plant and microbial alpha-amylases. The polypeptide is Alpha-amylase inhibitor AI-3688 (Kitasatospora aureofaciens (Streptomyces aureofaciens)).